Consider the following 237-residue polypeptide: Ig heavy chain Mem5 (237 aa).

Ig-like domains are found at residues 1–119 (EVKL…LTVS) and 126–218 (PSVY…KKIE). Cysteine 22 and cysteine 98 are disulfide-bonded. Positions 101–105 (VDYGT) are d segment. A JH2 segment region spans residues 106 to 120 (NYDYWGQGTTLTVSS). Cysteine 147 and cysteine 202 form a disulfide bridge.

It is found in the secreted. Functionally, anti-influenza H3N2 neuraminidase antibody. The chain is Ig heavy chain Mem5 from Mus musculus (Mouse).